A 152-amino-acid polypeptide reads, in one-letter code: Urease accessory protein UreE (152 aa).

Belongs to the UreE family.

The protein localises to the cytoplasm. Functionally, involved in urease metallocenter assembly. Binds nickel. Probably functions as a nickel donor during metallocenter assembly. The chain is Urease accessory protein UreE from Psychromonas ingrahamii (strain DSM 17664 / CCUG 51855 / 37).